The chain runs to 511 residues: Maturase K (511 aa).

It belongs to the intron maturase 2 family. MatK subfamily.

Its subcellular location is the plastid. It localises to the chloroplast. In terms of biological role, usually encoded in the trnK tRNA gene intron. Probably assists in splicing its own and other chloroplast group II introns. The chain is Maturase K from Diplacus aurantiacus (Orange bush monkey flower).